The primary structure comprises 338 residues: Phenylalanine--tRNA ligase alpha subunit (338 aa).

E253 contacts Mg(2+).

The protein belongs to the class-II aminoacyl-tRNA synthetase family. Phe-tRNA synthetase alpha subunit type 1 subfamily. In terms of assembly, tetramer of two alpha and two beta subunits. Mg(2+) serves as cofactor.

Its subcellular location is the cytoplasm. The enzyme catalyses tRNA(Phe) + L-phenylalanine + ATP = L-phenylalanyl-tRNA(Phe) + AMP + diphosphate + H(+). The sequence is that of Phenylalanine--tRNA ligase alpha subunit from Geobacter metallireducens (strain ATCC 53774 / DSM 7210 / GS-15).